A 1653-amino-acid chain; its full sequence is Alpha-2-macroglobulin (1653 aa).

The signal sequence occupies residues 1-17 (MKKLRVAACMLMLALAG). The N-palmitoyl cysteine moiety is linked to residue cysteine 18. Cysteine 18 carries S-diacylglycerol cysteine lipidation. Residues 1187–1190 (CLEQ) constitute a cross-link (isoglutamyl cysteine thioester (Cys-Gln)). A coiled-coil region spans residues 1559-1589 (NQNLANGSASLEQSGGEVQNLLNQMQQASIK).

It belongs to the protease inhibitor I39 (alpha-2-macroglobulin) family. Bacterial alpha-2-macroglobulin subfamily. May form homooligomers.

The protein localises to the cell inner membrane. Functionally, protects the bacterial cell from host peptidases. Acts by a 'trapping' mechanism. Cleavage of the bait-region domain by host peptidases leads to a global conformational change, which results in entrapment of the host peptidase and activation of the thioester bond that covalently binds the attacking host peptidase. Trapped peptidases are still active except against very large substrates. May protect the entire periplam, including the lipoproteins anchored to the periplasmic side of the outer membrane, against intruding endopeptidases. This is Alpha-2-macroglobulin (yfhM) from Escherichia coli (strain K12).